Consider the following 257-residue polypeptide: Granzyme M (257 aa).

The first 23 residues, 1–23 (MEACVSSLLVLALGALSVGSSFG), serve as a signal peptide directing secretion. Residues 24–25 (TQ) constitute a propeptide, activation peptide. In terms of domain architecture, Peptidase S1 spans 26 to 254 (IIGGREVIPH…YVSWIRKVTG (229 aa)). Cys51 and Cys67 are joined by a disulfide. Catalysis depends on charge relay system residues His66 and Asp111. Intrachain disulfides connect Cys145–Cys213, Cys176–Cys192, and Cys203–Cys230. N-linked (GlcNAc...) asparagine glycosylation is present at Asn177. Ser207 functions as the Charge relay system in the catalytic mechanism.

This sequence belongs to the peptidase S1 family. Granzyme subfamily. In terms of tissue distribution, highly and constitutively expressed in activated natural killer (NK) cells.

It is found in the secreted. The protein resides in the cytoplasmic granule. In terms of biological role, cleaves peptide substrates after methionine, leucine, and norleucine. Physiological substrates include EZR, alpha-tubulins and the apoptosis inhibitor BIRC5/Survivin. Promotes caspase activation and subsequent apoptosis of target cells. The protein is Granzyme M (GZMM) of Homo sapiens (Human).